Reading from the N-terminus, the 330-residue chain is MTTNNQNAVTVTVTGAGGQIGYSLLFRIAKGEVFGDRVVNLRLLETEQGVQAARGVALELADCAFPLLGEVSITTELSEGFKDANAVFLVGAKPRQKGEERADLLAANGKIFGPQGKAIAEYAADDVRVIVVGNPANTNAAIVAAHAEGLDPRRVTALTRLDHNRGLAQVADKLGVAVRDLKNMTVWGNHSASQFPDVAELTLNGEKVADKLDAAWVNDEFIPRVAKRGAEIIEVRGRSSAASAASAALDHMRDWVNGTAEGDWVSVALPSDGSYGIPEGLVFSFPCRSVDGEWEIVQGLEISPAQQERIDANIKELQEEKAAVEEAGLL.

An NAD(+)-binding site is contributed by 15 to 21 (GAGGQIG). Residues R95 and R101 each contribute to the substrate site. NAD(+) is bound by residues N108, Q115, and 132–134 (VGN). Substrate contacts are provided by N134 and R165. Residue H190 is the Proton acceptor of the active site.

Belongs to the LDH/MDH superfamily. MDH type 2 family.

It carries out the reaction (S)-malate + NAD(+) = oxaloacetate + NADH + H(+). In terms of biological role, catalyzes the reversible oxidation of malate to oxaloacetate. In Corynebacterium jeikeium (strain K411), this protein is Malate dehydrogenase.